The sequence spans 673 residues: Zinc finger protein 16 (673 aa).

Basic and acidic residues predominate over residues 1–10 (MPSLRTRREE). Residues 1 to 42 (MPSLRTRREEAEMELSAPGPSPWTPAPQARVSDAPAVTHPGS) are disordered. Residues 62–210 (YQQPDCDTRT…GVPTAESPLI (149 aa)) are necessary for transcription activation. The C2H2-type 1; degenerate zinc finger occupies 209-231 (LICNECGKTFRGNPDLIQRQIVH). A C2H2-type 2; degenerate zinc finger spans residues 237-259 (FMCDDCGKTFSQNSVLKNRHXSH). Lys-253 is covalently cross-linked (Glycyl lysine isopeptide (Lys-Gly) (interchain with G-Cter in SUMO2)). 7 C2H2-type zinc fingers span residues 284-306 (YTCTECGKAFSQNSSLKKHQKSH), 312-334 (YECNECGKAFRRSSNLIQHQRIH), 340-362 (YVCSECGKAFRRSSNLIKHHRTH), 368-390 (FECGECGKAFSQSAHLRKHQRVH), 396-418 (YECNDCGKPFSRVSNLIKHHRVH), 424-446 (YKCSDCGKAFSQSSSLIQHRRIH), and 452-474 (HVCNVCGKAFSYSSVLRKHQIIH). Residues 332–364 (RIHSGEKPYVCSECGKAFRRSSNLIKHHRTHTG) are required for nuclear localization. The required for nuclear localization stretch occupies residues 464–494 (SSVLRKHQIIHTGEKPYRCSVCGKAFSHSSA). Lys-478 bears the N6-acetyllysine mark. 7 consecutive C2H2-type zinc fingers follow at residues 480–502 (YRCSVCGKAFSHSSALIQHQGVH), 508–530 (YACHECGKTFGRSSNLILHQRVH), 536–558 (YECTECGKTFSQSSTLIQHQRIH), 564–586 (HECNQCGKAFNRSSNLIHHQKVH), 592–614 (YTCVECGKGFSQSSHLIQHQIIH), 620–642 (YKCSECGKAFSQRSVLIQHQRIH), and 648–670 (YDCAACGKAFSQRSKLIKHQLIH).

The protein belongs to the krueppel C2H2-type zinc-finger protein family. Interacts with INCA1; the interaction inhibits INCA1 activity and induces the cell cycle process.

It is found in the nucleus. In terms of biological role, acts as a transcriptional activator. Promotes cell proliferation by facilitating the cell cycle phase transition from the S to G2/M phase. Involved in both the hemin- and phorbol myristate acetate (PMA)-induced erythroid and megakaryocytic differentiation, respectively. Also plays a role as an inhibitor of cell apoptosis. The protein is Zinc finger protein 16 (ZNF16) of Pan paniscus (Pygmy chimpanzee).